The primary structure comprises 235 residues: Pyridoxine 5'-phosphate synthase (235 aa).

N6 serves as a coordination point for 3-amino-2-oxopropyl phosphate. Position 8–9 (8–9 (DH)) interacts with 1-deoxy-D-xylulose 5-phosphate. A 3-amino-2-oxopropyl phosphate-binding site is contributed by R17. The active-site Proton acceptor is the H42. 1-deoxy-D-xylulose 5-phosphate contacts are provided by R44 and H49. E69 (proton acceptor) is an active-site residue. Residue T99 participates in 1-deoxy-D-xylulose 5-phosphate binding. The active-site Proton donor is H188. 3-amino-2-oxopropyl phosphate contacts are provided by residues G189 and 210–211 (GH).

Belongs to the PNP synthase family. Homooctamer; tetramer of dimers.

The protein resides in the cytoplasm. It carries out the reaction 3-amino-2-oxopropyl phosphate + 1-deoxy-D-xylulose 5-phosphate = pyridoxine 5'-phosphate + phosphate + 2 H2O + H(+). Its pathway is cofactor biosynthesis; pyridoxine 5'-phosphate biosynthesis; pyridoxine 5'-phosphate from D-erythrose 4-phosphate: step 5/5. Functionally, catalyzes the complicated ring closure reaction between the two acyclic compounds 1-deoxy-D-xylulose-5-phosphate (DXP) and 3-amino-2-oxopropyl phosphate (1-amino-acetone-3-phosphate or AAP) to form pyridoxine 5'-phosphate (PNP) and inorganic phosphate. In Wolbachia pipientis subsp. Culex pipiens (strain wPip), this protein is Pyridoxine 5'-phosphate synthase.